The primary structure comprises 437 residues: Cysteine--tRNA ligase (437 aa).

Cysteine 31 lines the Zn(2+) pocket. Positions 33–43 match the 'HIGH' region motif; it reads PTVYNDLHLGN. Zn(2+) contacts are provided by cysteine 205, histidine 230, and glutamate 234. The short motif at 262–266 is the 'KMSKS' region element; that stretch reads KMSKS. Lysine 265 provides a ligand contact to ATP.

It belongs to the class-I aminoacyl-tRNA synthetase family. In terms of assembly, monomer. Requires Zn(2+) as cofactor.

It is found in the cytoplasm. It carries out the reaction tRNA(Cys) + L-cysteine + ATP = L-cysteinyl-tRNA(Cys) + AMP + diphosphate. The chain is Cysteine--tRNA ligase (cysS) from Mycoplasma pneumoniae (strain ATCC 29342 / M129 / Subtype 1) (Mycoplasmoides pneumoniae).